We begin with the raw amino-acid sequence, 297 residues long: Nicotinate-nucleotide pyrophosphorylase [carboxylating] (297 aa).

Residues 8-12 form an important for hexamer formation region; sequence LLLPP. Quinolinate contacts are provided by residues Arg102, 138-139, 160-161, Lys171, Glu201, Asp222, 248-250, and Gly270; these read RK, HR, and SGG.

The protein belongs to the NadC/ModD family. Hexamer formed by 3 homodimers.

The enzyme catalyses nicotinate beta-D-ribonucleotide + CO2 + diphosphate = quinolinate + 5-phospho-alpha-D-ribose 1-diphosphate + 2 H(+). It functions in the pathway cofactor biosynthesis; NAD(+) biosynthesis; nicotinate D-ribonucleotide from quinolinate: step 1/1. Its activity is regulated as follows. Activity toward QA is slightly repressed by phosphoribosylpyrophosphate (PRPP) in both a competitive and a non-competitive manner. Competitively inhibited by phthalic acid (PHT). In terms of biological role, involved in the catabolism of quinolinic acid (QA). In Homo sapiens (Human), this protein is Nicotinate-nucleotide pyrophosphorylase [carboxylating] (QPRT).